We begin with the raw amino-acid sequence, 141 residues long: Nucleoside diphosphate kinase (141 aa).

Positions 11, 59, 87, 93, 104, and 114 each coordinate ATP. Residue histidine 117 is the Pros-phosphohistidine intermediate of the active site.

This sequence belongs to the NDK family. Homotetramer. Requires Mg(2+) as cofactor.

It localises to the cytoplasm. The enzyme catalyses a 2'-deoxyribonucleoside 5'-diphosphate + ATP = a 2'-deoxyribonucleoside 5'-triphosphate + ADP. The catalysed reaction is a ribonucleoside 5'-diphosphate + ATP = a ribonucleoside 5'-triphosphate + ADP. Functionally, major role in the synthesis of nucleoside triphosphates other than ATP. The ATP gamma phosphate is transferred to the NDP beta phosphate via a ping-pong mechanism, using a phosphorylated active-site intermediate. This chain is Nucleoside diphosphate kinase, found in Laribacter hongkongensis (strain HLHK9).